Reading from the N-terminus, the 322-residue chain is 8-oxo-(d)GTP phosphatase (322 aa).

The disordered stretch occupies residues 1–21 (MMPVDDLQEIPLSKDTTEKSK). In terms of domain architecture, Nudix hydrolase spans 22–156 (HTVRAAGAVL…DDRKVLRRFV (135 aa)). Residues 55–58 (RPRY), Asp60, and 65–67 (KGK) each bind substrate. Positions 65, 81, and 85 each coordinate Mg(2+). The Nudix box motif lies at 66–87 (GKLDQGETEPVAAAREIHEETG). Substrate-binding residues include Tyr101, Lys108, Glu127, and Tyr145. Glu127 serves as a coordination point for Mg(2+).

This sequence belongs to the Nudix hydrolase family. As to quaternary structure, forms head-to-tail homodimers. The cofactor is Mg(2+).

It catalyses the reaction 8-oxo-dGTP + H2O = 8-oxo-dGDP + phosphate + H(+). It carries out the reaction 8-oxo-GTP + H2O = 8-oxo-GDP + phosphate + H(+). The catalysed reaction is 8-oxo-dGDP + H2O = 8-oxo-dGMP + phosphate + H(+). The enzyme catalyses 8-oxo-GDP + H2O = 8-oxo-GMP + phosphate + H(+). It catalyses the reaction P(1),P(6)-bis(5'-adenosyl) hexaphosphate + H2O = 2 ATP + 2 H(+). It carries out the reaction P(1),P(5)-bis(5'-adenosyl) pentaphosphate + H2O = ADP + ATP + 2 H(+). The catalysed reaction is P(1),P(4)-bis(5'-adenosyl) tetraphosphate + H2O = AMP + ATP + 2 H(+). Its activity is regulated as follows. Ap4A hydrolysis is inhibited by fluoride ions. In terms of biological role, catalyzes the conversion of 8-oxo-dGTP to 8-oxo-dGDP, and 8-oxo-GTP to 8-oxo-GDP. At high enzyme concentrations, can also catalyze the conversion of 8-oxo-dGDP to 8-oxo-dGMP, and 8-oxo-GDP to 8-oxo-GMP. In addition, catalyzes the hydrolysis of the diadenosine polyphosphates diadenosine hexaphosphate (Ap6A), diadenosine pentaphosphate (Ap5A) and diadenosine tetraphosphate (Ap4A). In Mycolicibacterium smegmatis (strain ATCC 700084 / mc(2)155) (Mycobacterium smegmatis), this protein is 8-oxo-(d)GTP phosphatase.